Reading from the N-terminus, the 137-residue chain is MPTTNQLVVNGRENKVRKQNAPALNLSFNTLTKSARKLPAPFKRGVCTRVATMTPKKPNSASRKYARVKLSNGMEITAYIGGEGHNLQEHSVVLIRGGRVKDLPGVRYHIVRGTQDLAGVANRKQGRSLYGAKKEKK.

The residue at position 102 (aspartate 102) is a 3-methylthioaspartic acid.

The protein belongs to the universal ribosomal protein uS12 family. In terms of assembly, part of the 30S ribosomal subunit. Contacts proteins S8 and S17. May interact with IF1 in the 30S initiation complex.

With S4 and S5 plays an important role in translational accuracy. Functionally, interacts with and stabilizes bases of the 16S rRNA that are involved in tRNA selection in the A site and with the mRNA backbone. Located at the interface of the 30S and 50S subunits, it traverses the body of the 30S subunit contacting proteins on the other side and probably holding the rRNA structure together. The combined cluster of proteins S8, S12 and S17 appears to hold together the shoulder and platform of the 30S subunit. This Mycoplasmopsis agalactiae (strain NCTC 10123 / CIP 59.7 / PG2) (Mycoplasma agalactiae) protein is Small ribosomal subunit protein uS12.